Reading from the N-terminus, the 406-residue chain is 2-epi-valiolone synthase (406 aa).

Residues 1 to 21 (MPSTGSTPILAHDVKSPHRGS) are disordered. NAD(+) is bound by residues 105-108 (EPSK), 137-141 (GVLCD), 161-162 (TS), Lys174, Lys183, and 201-204 (CLAT). Zn(2+) contacts are provided by Glu216, His287, and His304.

Belongs to the sugar phosphate cyclases superfamily. EVS family. The cofactor is NAD(+). Co(2+) serves as cofactor. Requires Zn(2+) as cofactor.

It catalyses the reaction D-sedoheptulose 7-phosphate = 2-epi-valiolone + phosphate. In terms of biological role, catalyzes the conversion of sedoheptulose 7-phosphate to 2-epi-valiolone, which may serve as an alternative precursor for aminocyclitol biosynthesis. This is 2-epi-valiolone synthase from Stigmatella aurantiaca (strain DW4/3-1).